Reading from the N-terminus, the 384-residue chain is Gastrin-releasing peptide receptor (384 aa).

At 1 to 38 the chain is on the extracellular side; it reads MALNDCFLLNLEVDHFMHCNISSHSADLPVNDDWSHPG. Residue asparagine 20 is glycosylated (N-linked (GlcNAc...) asparagine). The helical transmembrane segment at 39-62 threads the bilayer; the sequence is ILYVIPAVYGVIILIGLIGNITLI. Over 63–76 the chain is Cytoplasmic; sequence KIFCTVKSMRNVPN. A helical transmembrane segment spans residues 77 to 96; that stretch reads LFISSLALGDLLLLITCAPV. At 97–114 the chain is on the extracellular side; sequence DASRYLADRWLFGRIGCK. Cysteine 113 and cysteine 196 form a disulfide bridge. A helical transmembrane segment spans residues 115–136; the sequence is LIPFIQLTSVGVSVFTLTALSA. Residues 137 to 152 lie on the Cytoplasmic side of the membrane; it reads DRYKAIVRPMDIQASH. A helical membrane pass occupies residues 153-174; the sequence is ALMKICLKAAFIWIISMLLAIP. The Extracellular portion of the chain corresponds to 175-208; that stretch reads EAVFSDLHPFHEESTNQTFISCAPYPHSNELHPK. Residues 209 to 234 traverse the membrane as a helical segment; that stretch reads IHSMASFLVFYVIPLSIISVYYYFIA. The Cytoplasmic portion of the chain corresponds to 235 to 264; sequence KNLIQSAYNLPVEGNIHVKKQIESRKRLAK. The helical transmembrane segment at 265–285 threads the bilayer; sequence TVLVFVGLFAFCWLPNHVIYL. The Extracellular segment spans residues 286-298; that stretch reads YRSYHYSEVDTSM. A helical membrane pass occupies residues 299–325; it reads LHFVTSICARLLAFTNSCVNPFALYLL. The Cytoplasmic segment spans residues 326–384; that stretch reads SKSFRKQFNTQLLCCQPGLIIRSHSTGRSTTCMTSLKSTNPSVATFSLINGNICHERYV. Cysteine 339 is lipidated: S-palmitoyl cysteine. Position 350 is a phosphoserine (serine 350).

This sequence belongs to the G-protein coupled receptor 1 family. Highly expressed in pancreas. Also expressed in stomach, adrenal cortex and brain. In brain, expressed in cells throughout the cortex.

It localises to the cell membrane. In terms of biological role, receptor for gastrin-releasing peptide (GRP). Signals via association with G proteins that activate a phosphatidylinositol-calcium second messenger system, resulting in Akt phosphorylation. Contributes to the regulation of food intake. Contributes to the perception of prurient stimuli and transmission of itch signals in the spinal cord that promote scratching behavior, but does not play a role in the perception of pain. Contributes primarily to nonhistaminergic itch sensation. In one study, shown to act in the amygdala as part of an inhibitory network which inhibits memory specifically related to learned fear. In another study, shown to contribute to disinhibition of glutamatergic cells in the auditory cortex via signaling on vasoactive intestinal peptide-expressing cells which leads to enhanced auditory fear memories. Contributes to the induction of sighing through signaling in the pre-Botzinger complex, a cluster of several thousand neurons in the ventrolateral medulla responsible for inspiration during respiratory activity. The protein is Gastrin-releasing peptide receptor (GRPR) of Homo sapiens (Human).